Here is a 217-residue protein sequence, read N- to C-terminus: Kunitz-type trypsin inhibitor-like 2 protein (217 aa).

The N-terminal stretch at 1 to 26 (MKPLSPLTLSFLLFVFITTLSLAFSN) is a signal peptide. Cystine bridges form between C70–C115 and C168–C175. N191 is a glycosylation site (N-linked (GlcNAc...) asparagine).

The protein belongs to the protease inhibitor I3 (leguminous Kunitz-type inhibitor) family.

The protein localises to the secreted. In terms of biological role, might act as a protease inhibitor involved in plant defense responses. This is Kunitz-type trypsin inhibitor-like 2 protein (PIP20-2) from Pisum sativum (Garden pea).